A 314-amino-acid chain; its full sequence is 4-hydroxy-3-methylbut-2-enyl diphosphate reductase (314 aa).

C12 is a [4Fe-4S] cluster binding site. Positions 41 and 74 each coordinate (2E)-4-hydroxy-3-methylbut-2-enyl diphosphate. Positions 41 and 74 each coordinate dimethylallyl diphosphate. Residues H41 and H74 each contribute to the isopentenyl diphosphate site. A [4Fe-4S] cluster-binding site is contributed by C96. H124 serves as a coordination point for (2E)-4-hydroxy-3-methylbut-2-enyl diphosphate. Position 124 (H124) interacts with dimethylallyl diphosphate. Isopentenyl diphosphate is bound at residue H124. The Proton donor role is filled by E126. T167 contributes to the (2E)-4-hydroxy-3-methylbut-2-enyl diphosphate binding site. C197 is a [4Fe-4S] cluster binding site. Positions 225, 226, 227, and 269 each coordinate (2E)-4-hydroxy-3-methylbut-2-enyl diphosphate. Residues S225, S226, N227, and S269 each contribute to the dimethylallyl diphosphate site. Isopentenyl diphosphate is bound by residues S225, S226, N227, and S269.

It belongs to the IspH family. Requires [4Fe-4S] cluster as cofactor.

It carries out the reaction isopentenyl diphosphate + 2 oxidized [2Fe-2S]-[ferredoxin] + H2O = (2E)-4-hydroxy-3-methylbut-2-enyl diphosphate + 2 reduced [2Fe-2S]-[ferredoxin] + 2 H(+). It catalyses the reaction dimethylallyl diphosphate + 2 oxidized [2Fe-2S]-[ferredoxin] + H2O = (2E)-4-hydroxy-3-methylbut-2-enyl diphosphate + 2 reduced [2Fe-2S]-[ferredoxin] + 2 H(+). The protein operates within isoprenoid biosynthesis; dimethylallyl diphosphate biosynthesis; dimethylallyl diphosphate from (2E)-4-hydroxy-3-methylbutenyl diphosphate: step 1/1. Its pathway is isoprenoid biosynthesis; isopentenyl diphosphate biosynthesis via DXP pathway; isopentenyl diphosphate from 1-deoxy-D-xylulose 5-phosphate: step 6/6. Catalyzes the conversion of 1-hydroxy-2-methyl-2-(E)-butenyl 4-diphosphate (HMBPP) into a mixture of isopentenyl diphosphate (IPP) and dimethylallyl diphosphate (DMAPP). Acts in the terminal step of the DOXP/MEP pathway for isoprenoid precursor biosynthesis. This Haemophilus influenzae (strain PittEE) protein is 4-hydroxy-3-methylbut-2-enyl diphosphate reductase.